The sequence spans 292 residues: Homeobox-leucine zipper protein HOX19 (292 aa).

Disordered regions lie at residues 14-85 (LALG…HSVS), 99-133 (RERA…RLTK), and 217-236 (FAPP…PPAP). The segment covering 28–74 (TDAAAAHRGGCRRPSPSSQCPPLEPSLTLSLPDDAAAGAAATATATA) has biased composition (low complexity). Positions 99 to 109 (RERAEEADGER) are enriched in basic and acidic residues. The segment at residues 124 to 183 (STRKKLRLTKEQSALLEDRFREHSTLNPKQKVALAKQLNLRPRQVEVWFQNRRARTKLKQ) is a DNA-binding region (homeobox). The leucine-zipper stretch occupies residues 182–226 (KQTEVDCEFLKRCCETLTEENRRLQRELQELRALKFAPPPPSSAA).

It belongs to the HD-ZIP homeobox family. Class II subfamily. In terms of tissue distribution, expressed in seedlings, roots, stems, leaf sheaths and blades and panicles.

The protein resides in the nucleus. Probable transcription factor. The chain is Homeobox-leucine zipper protein HOX19 (HOX19) from Oryza sativa subsp. japonica (Rice).